The following is a 212-amino-acid chain: uncharacterized protein (212 aa).

An SIS domain is found at 46 to 198 (LERVYREKRK…IYSLMTRLGI (153 aa)).

This sequence belongs to the SIS family. PHI subfamily.

This is an uncharacterized protein from Aeropyrum pernix (strain ATCC 700893 / DSM 11879 / JCM 9820 / NBRC 100138 / K1).